The primary structure comprises 281 residues: MPPPLEARDYIGLAASPASSSSSCCASTPVAEVVGAHLALRLGLPGSESPARAEAEAVVVDAALTLGPAPPPRGGAKRGFVDSLDRSEGRRAAATAGDDERGVREEEEEEKGLGEAAAGAPRAAKAQVVGWPPVRSYRKNTLAASATKTKGEDQGKSEVGCCYVKVSMDGAPYLRKVDLKTYSSYEDLSLALEKMFSCFITGRSSSHKTSKRDRLTDGSRADALKDQEYVLTYEDKDADWMLVGDLPWDLFTTSCRKLRIMRGSDAAGMAPRSLEQTGQNK.

The EAR-like (transcriptional repression) motif lies at 40–44 (LRLGL). Residues 66-126 (LGPAPPPRGG…AAGAPRAAKA (61 aa)) form a disordered region. The segment covering 79 to 91 (GFVDSLDRSEGRR) has biased composition (basic and acidic residues). Low complexity predominate over residues 114–126 (GEAAAGAPRAAKA). The region spanning 161–265 (CCYVKVSMDG…RKLRIMRGSD (105 aa)) is the PB1 domain.

Belongs to the Aux/IAA family. Homodimers and heterodimers. In terms of tissue distribution, expressed in etiolated seedlings and flowers.

The protein localises to the nucleus. Its function is as follows. Aux/IAA proteins are short-lived transcriptional factors that function as repressors of early auxin response genes at low auxin concentrations. This is Auxin-responsive protein IAA19 (IAA19) from Oryza sativa subsp. japonica (Rice).